Consider the following 340-residue polypeptide: GTP-binding protein REM 2 (340 aa).

Acidic residues predominate over residues 1-13 (MHTDLDTDMDMDT). The segment at 1 to 107 (MHTDLDTDMD…SDSLGSGEAA (107 aa)) is disordered. Ser-27 carries the post-translational modification Phosphoserine. Basic and acidic residues predominate over residues 40 to 53 (LLKKSEKLLAELDR). Residues 93–104 (SSSGSSDSLGSG) show a composition bias toward low complexity. Residues 121–128 (GESGVGKS), 229–232 (NKSD), and 260–261 (AA) contribute to the GTP site. Residues 283–308 (RNHAGGQRPDPGSPEGPAPPARRESL) form a disordered region. The span at 293 to 302 (PGSPEGPAPP) shows a compositional bias: pro residues. Ser-295 carries the post-translational modification Phosphoserine.

Belongs to the small GTPase superfamily. RGK family.

It is found in the cell membrane. Binds GTP saturably and exhibits a low intrinsic rate of GTP hydrolysis. The sequence is that of GTP-binding protein REM 2 (REM2) from Homo sapiens (Human).